Reading from the N-terminus, the 88-residue chain is Small ribosomal subunit protein uS15 (88 aa).

Belongs to the universal ribosomal protein uS15 family. Part of the 30S ribosomal subunit. Forms a bridge to the 50S subunit in the 70S ribosome, contacting the 23S rRNA.

Its function is as follows. One of the primary rRNA binding proteins, it binds directly to 16S rRNA where it helps nucleate assembly of the platform of the 30S subunit by binding and bridging several RNA helices of the 16S rRNA. Forms an intersubunit bridge (bridge B4) with the 23S rRNA of the 50S subunit in the ribosome. In Geotalea uraniireducens (strain Rf4) (Geobacter uraniireducens), this protein is Small ribosomal subunit protein uS15.